The chain runs to 83 residues: Small ribosomal subunit protein bS20 (83 aa).

Belongs to the bacterial ribosomal protein bS20 family.

Functionally, binds directly to 16S ribosomal RNA. This Lactobacillus delbrueckii subsp. bulgaricus (strain ATCC 11842 / DSM 20081 / BCRC 10696 / JCM 1002 / NBRC 13953 / NCIMB 11778 / NCTC 12712 / WDCM 00102 / Lb 14) protein is Small ribosomal subunit protein bS20.